The primary structure comprises 505 residues: Tyrosine-protein kinase isoform SRK1 (505 aa).

2 stretches are compositionally biased toward polar residues: residues 1–10 (MGSCCSSQDG) and 18–31 (AGST…SQSV). The interval 1–53 (MGSCCSSQDGDGNGKATAGSTVDSHELSQSVKGKIKQPEPKPKPPPQVPPAQD) is disordered. An SH3 domain is found at 54 to 116 (VKYPIYVGKY…PSNYVAEYKS (63 aa)). The SH2 domain occupies 122–214 (WFLGKIKRVE…GLCCKLLYPC (93 aa)). The region spanning 240-493 (IKLLRRLGAG…TLQWQLEEFF (254 aa)) is the Protein kinase domain. ATP contacts are provided by residues 246-254 (LGAGQFGEV) and K268. D359 functions as the Proton acceptor in the catalytic mechanism.

Belongs to the protein kinase superfamily. Tyr protein kinase family. SRC subfamily.

Its subcellular location is the cytoplasm. The enzyme catalyses L-tyrosyl-[protein] + ATP = O-phospho-L-tyrosyl-[protein] + ADP + H(+). The polypeptide is Tyrosine-protein kinase isoform SRK1 (SRK1) (Spongilla lacustris (Freshwater sponge)).